Here is an 839-residue protein sequence, read N- to C-terminus: Heat shock 70 kDa protein 4L (839 aa).

2 positions are modified to phosphoserine: Ser74 and Ser508. The segment covering 503–554 (LEGDHSDAPMETETSFKNENKDNMDKMQVDQEEGHQKCHAEHTPEEEIDHTG) has biased composition (basic and acidic residues). The tract at residues 503-567 (LEGDHSDAPM…KSAVSDKQDR (65 aa)) is disordered. Thr545 carries the phosphothreonine modification. Ser579 carries the post-translational modification Phosphoserine. Thr761 bears the Phosphothreonine mark. Residues 786-839 (IYKPKPKAEVPEDKPKANSEHNGPMDGQSGTETKSDSTKDSSQHTKSSGEMEVD) are disordered. Basic and acidic residues-rich tracts occupy residues 791-804 (PKAE…KANS) and 818-839 (TKSD…MEVD).

The protein belongs to the heat shock protein 70 family. In terms of assembly, homodimer.

The protein localises to the cytoplasm. It is found in the nucleus. Functionally, possesses chaperone activity in vitro where it inhibits aggregation of citrate synthase. This chain is Heat shock 70 kDa protein 4L (HSPA4L), found in Homo sapiens (Human).